Reading from the N-terminus, the 229-residue chain is Ion-translocating oxidoreductase complex subunit E (229 aa).

The next 5 helical transmembrane spans lie at Leu58 to Phe78, Ile82 to Ile102, Leu105 to Val125, Ala147 to Ile167, and Gly201 to Val221.

It belongs to the NqrDE/RnfAE family. In terms of assembly, the complex is composed of six subunits: RnfA, RnfB, RnfC, RnfD, RnfE and RnfG.

The protein localises to the cell inner membrane. Functionally, part of a membrane-bound complex that couples electron transfer with translocation of ions across the membrane. This is Ion-translocating oxidoreductase complex subunit E from Glaesserella parasuis serovar 5 (strain SH0165) (Haemophilus parasuis).